Reading from the N-terminus, the 1588-residue chain is Paternally-expressed gene 3 protein (1588 aa).

One can recognise an SCAN box domain in the interval 46–128; that stretch reads HQRFRNLIYV…TLLENYKEMY (83 aa). 3 disordered regions span residues 128-230, 266-306, and 319-349; these read YQPE…ESYQ, DGHS…RRGI, and KFIK…MSDD. Over residues 129–142 the composition is skewed to acidic residues; that stretch reads QPEDDNNSDVTSDD. Basic and acidic residues-rich tracts occupy residues 143 to 152, 161 to 182, 206 to 225, and 295 to 306; these read DMTRNRRESS, SGDR…DRWS, FEMD…RSQD, and PEAKKSTHRRGI. 3 consecutive C2H2-type zinc fingers follow at residues 454–476, 507–529, and 565–587; these read YVCD…QIMH, FECK…RKIH, and YECR…QKIH. Basic and acidic residues predominate over residues 588–607; sequence FGDDKDNEREHERERERGET. Positions 588 to 610 are disordered; that stretch reads FGDDKDNEREHERERERGETFRP. The segment at 627–649 adopts a C2H2-type 4 zinc-finger fold; the sequence is YECKVCGETFLHSSSLKEHQKIH. The disordered stretch occupies residues 838 to 930; that stretch reads LVASKPPRSH…EFSVPSSNVR (93 aa). The span at 868 to 881 shows a compositional bias: basic and acidic residues; sequence LNDKRQKIPARENP. The segment at 969–991 adopts a C2H2-type 5 zinc-finger fold; sequence YECQECGECFAHSSDLTEHQKIH. The interval 1056-1104 is disordered; that stretch reads EKSHGEESQGENTDGEETHSEETHGQETIEDPVIQGSDMEDPQKDDPDD. A compositionally biased stretch (basic and acidic residues) spans 1071-1082; sequence EETHSEETHGQE. 5 consecutive C2H2-type zinc fingers follow at residues 1107–1129, 1163–1185, 1225–1247, 1282–1304, and 1332–1354; these read YECE…QKVH, YECP…QRIH, IRCL…MRLH, FECA…VTVH, and YECK…KELH. Residues 1395–1415 show a composition bias toward acidic residues; it reads AEPEVEAAEPEVEAAEPEVEA. Residues 1395 to 1495 form a disordered region; sequence AEPEVEAAEP…GIEDPEEGED (101 aa). Tandem repeats lie at residues 1397–1403, 1404–1410, 1411–1417, 1418–1422, 1425–1429, 1432–1436, and 1439–1443. Residues 1397-1417 form a 3 X 7 AA repeat of P-E-V-E-A-A-E region; sequence PEVEAAEPEVEAAEPEVEAAE. A 4 X 5 AA repeat of P-X-G-E-A region spans residues 1418-1443; it reads PNGEAEGPDGEAAEPIGEAGQPNGEA. Composition is skewed to acidic residues over residues 1449–1466 and 1475–1495; these read DADE…ERAE and PEGD…EGED. C2H2-type zinc fingers lie at residues 1505–1527 and 1564–1586; these read YDCH…LKTH and FKCD…QNTH.

It belongs to the krueppel C2H2-type zinc-finger protein family. As to quaternary structure, homodimer. Interacts with SIAH1A and SIAH2. Interacts with TRAF2.

The protein localises to the nucleus. The protein resides in the cytoplasm. Functionally, induces apoptosis in cooperation with SIAH1A. Acts as a mediator between p53/TP53 and BAX in a neuronal death pathway that is activated by DNA damage. Acts synergistically with TRAF2 and inhibits TNF induced apoptosis through activation of NF-kappa-B. The chain is Paternally-expressed gene 3 protein (PEG3) from Pan troglodytes (Chimpanzee).